Here is a 167-residue protein sequence, read N- to C-terminus: Probable host range protein 2 (167 aa).

It belongs to the poxviridae C7 protein family.

Plays a role for multiplication of the virus in different cell types. This Yaba monkey tumor virus (strain VR587) (YMTV) protein is Probable host range protein 2.